The sequence spans 875 residues: GATOR2 complex protein MIOS (875 aa).

WD repeat units follow at residues 58 to 100 (SDTP…NSKF), 111 to 155 (KHAR…TPDI), 182 to 221 (GQND…QKMF), 223 to 261 (NTKA…KPVL), 265 to 306 (EQPK…TPIG), and 395 to 437 (RLRA…KQYT). The segment at 735–781 (VSCNFCGKSISYSCSAVPHQGRGFSQYGVSGSPTKSKVTSCPGCRKP) adopts a C4-type zinc-finger fold. The Zn(2+) site is built by C737 and C740. 2 positions are modified to phosphoserine: S759 and S766. Zn(2+)-binding residues include C775, C778, C788, C827, C830, H832, H835, H838, C849, C854, and C858. Residues 782–863 (LPRCALCLIN…CTCKCMQLDT (82 aa)) form an RING-type; atypical zinc finger.

The protein belongs to the WD repeat mio family. As to quaternary structure, component of the GATOR2 subcomplex, composed of MIOS, SEC13, SEH1L, WDR24 and WDR59. The GATOR2 complex interacts with CASTOR1 and CASTOR2; the interaction is negatively regulated by arginine. CASTOR1 and CASTOR2 convey leucine availability via direct interaction with MIOS. The GATOR2 complex interacts with SESN1, SESN2 and SESN3; the interaction is negatively regulated by amino acids. Interacts with SAR1A and SAR1B; the interaction is direct, disrupted by leucine and mediates the interaction of SAR1A or SAR1B with the GATOR2 complex to negatively regulate the TORC1 signaling upon leucine deprivation.

The protein localises to the lysosome membrane. The GATOR2 complex is negatively regulated by the upstream amino acid sensors CASTOR1 and SESN2, which sequester the GATOR2 complex in absence of amino acids. In the presence of abundant amino acids, GATOR2 is released from CASTOR1 and SESN2 and activated. In terms of biological role, as a component of the GATOR2 complex, functions as an activator of the amino acid-sensing branch of the mTORC1 signaling pathway. The GATOR2 complex indirectly activates mTORC1 through the inhibition of the GATOR1 subcomplex. GATOR2 probably acts as an E3 ubiquitin-protein ligase toward GATOR1. In the presence of abundant amino acids, the GATOR2 complex mediates ubiquitination of the NPRL2 core component of the GATOR1 complex, leading to GATOR1 inactivation. In the absence of amino acids, GATOR2 is inhibited, activating the GATOR1 complex. Within the GATOR2 complex, MIOS is required to prevent autoubiquitination of WDR24, the catalytic subunit of the complex. The GATOR2 complex is required for brain myelination. The sequence is that of GATOR2 complex protein MIOS from Homo sapiens (Human).